The primary structure comprises 922 residues: Translation initiation factor IF-2 (922 aa).

The tract at residues 243–329 is disordered; sequence AAREAAKLAE…GKSKSGQEET (87 aa). The segment covering 250–264 has biased composition (low complexity); that stretch reads LAEAQKAAAPAPAAP. Positions 267 to 298 are enriched in basic and acidic residues; that stretch reads KTLHKPDKPAAAKGAKGPDKKPAGAWKDDAAR. The 168-residue stretch at 422–589 folds into the tr-type G domain; it reads ARPPVVTVMG…AILLQAEVLE (168 aa). A G1 region spans residues 431-438; that stretch reads GHVDHGKT. Position 431 to 438 (431 to 438) interacts with GTP; the sequence is GHVDHGKT. The interval 456–460 is G2; it reads GITQH. Positions 477 to 480 are G3; the sequence is DTPG. Residues 477-481 and 531-534 contribute to the GTP site; these read DTPGH and NKID. Residues 531–534 form a G4 region; the sequence is NKID. The tract at residues 567 to 569 is G5; the sequence is SAK.

Belongs to the TRAFAC class translation factor GTPase superfamily. Classic translation factor GTPase family. IF-2 subfamily.

The protein resides in the cytoplasm. In terms of biological role, one of the essential components for the initiation of protein synthesis. Protects formylmethionyl-tRNA from spontaneous hydrolysis and promotes its binding to the 30S ribosomal subunits. Also involved in the hydrolysis of GTP during the formation of the 70S ribosomal complex. The chain is Translation initiation factor IF-2 from Thiobacillus denitrificans (strain ATCC 25259 / T1).